Consider the following 109-residue polypeptide: RNA-binding protein Hfq (109 aa).

Positions 9-68 (DPFLNALRKEKVNVSVYLVNGIKLQGQVEAFDQFCIVLRNTVNQMVYKHAISTIVPAKSV) constitute a Sm domain. The disordered stretch occupies residues 77 to 109 (PYHQNSNDEQDENVDDIHSDDLEIQENEGNIHE).

This sequence belongs to the Hfq family. As to quaternary structure, homohexamer.

In terms of biological role, RNA chaperone that binds small regulatory RNA (sRNAs) and mRNAs to facilitate mRNA translational regulation in response to envelope stress, environmental stress and changes in metabolite concentrations. Also binds with high specificity to tRNAs. This chain is RNA-binding protein Hfq, found in Francisella tularensis subsp. mediasiatica (strain FSC147).